A 230-amino-acid polypeptide reads, in one-letter code: Ureidoacrylate amidohydrolase RutB (230 aa).

Aspartate 24 acts as the Proton acceptor in catalysis. Lysine 133 is an active-site residue. The active-site Nucleophile is cysteine 166.

This sequence belongs to the isochorismatase family. RutB subfamily.

It carries out the reaction (Z)-3-ureidoacrylate + H2O + H(+) = (Z)-3-aminoacrylate + NH4(+) + CO2. The catalysed reaction is (Z)-3-ureidoacrylate + H2O = (Z)-3-aminoacrylate + carbamate + H(+). The enzyme catalyses (Z)-2-methylureidoacrylate + H2O + H(+) = (Z)-2-methylaminoacrylate + NH4(+) + CO2. Hydrolyzes ureidoacrylate to form aminoacrylate and carbamate. The carbamate hydrolyzes spontaneously, thereby releasing one of the nitrogen atoms of the pyrimidine ring as ammonia and one of its carbon atoms as CO2. The protein is Ureidoacrylate amidohydrolase RutB of Escherichia coli O111:H- (strain 11128 / EHEC).